Here is a 603-residue protein sequence, read N- to C-terminus: O-acetyltransferase OatA (603 aa).

Transmembrane regions (helical) follow at residues 17–37, 45–65, 87–107, 148–168, 177–197, 211–231, 239–259, 268–288, 311–331, 333–353, and 382–402; these read YLPG…IYHL, GFLG…SLLI, LIPA…IFKP, LWSL…ITFL, IIQT…VIHF, TRLQ…PFAL, IVVS…TLFF, IYNG…AIAV, YSLY…YVQG, IPVY…EISY, and VLVI…FDAL. Active-site residues include serine 453, aspartate 575, and histidine 578.

Belongs to the acyltransferase 3 family. Monomer.

Its subcellular location is the cell membrane. Functionally, responsible for O-acetylation at the C(6)-hydroxyl group of N-acetylmuramyl residues, forming the corresponding N,6-O-diacetylmuramic acid of the peptidoglycan. O-acetylation of the peptidoglycan is the major determinant for lysozyme resistance. The chain is O-acetyltransferase OatA from Staphylococcus aureus (strain NCTC 8325 / PS 47).